A 489-amino-acid chain; its full sequence is Glucose-1-phosphate adenylyltransferase small subunit, chloroplastic/amyloplastic (489 aa).

Residues 1 to 52 constitute a chloroplast transit peptide; sequence ITVPSTSSKNLQNSLAFSSSSLSGDKIQTTSFLNRRYCRISSRAPIVVSPKA.

It belongs to the bacterial/plant glucose-1-phosphate adenylyltransferase family. In terms of assembly, heterotetramer. As to expression, prominently expressed in the leaves. A lower level expression is seen in the roots.

The protein resides in the plastid. It localises to the chloroplast. Its subcellular location is the amyloplast. The enzyme catalyses alpha-D-glucose 1-phosphate + ATP + H(+) = ADP-alpha-D-glucose + diphosphate. It functions in the pathway glycan biosynthesis; starch biosynthesis. With respect to regulation, activated by 3'phosphoglycerate, inhibited by orthophosphate. Allosteric regulation. Functionally, this protein plays a role in synthesis of starch. It catalyzes the synthesis of the activated glycosyl donor, ADP-glucose from Glc-1-P and ATP. The protein is Glucose-1-phosphate adenylyltransferase small subunit, chloroplastic/amyloplastic (AGPB1) of Beta vulgaris (Sugar beet).